The sequence spans 211 residues: Ribosomal RNA small subunit methyltransferase G (211 aa).

Residues G81, L86, 132-133, and R147 contribute to the S-adenosyl-L-methionine site; that span reads AE.

Belongs to the methyltransferase superfamily. RNA methyltransferase RsmG family.

It is found in the cytoplasm. It carries out the reaction guanosine(527) in 16S rRNA + S-adenosyl-L-methionine = N(7)-methylguanosine(527) in 16S rRNA + S-adenosyl-L-homocysteine. In terms of biological role, specifically methylates the N7 position of guanine in position 527 of 16S rRNA. The chain is Ribosomal RNA small subunit methyltransferase G from Dichelobacter nodosus (strain VCS1703A).